Reading from the N-terminus, the 2769-residue chain is Teneurin-4 (2769 aa).

Residues 1 to 22 (MDVKERKPYRSLTRRRDAERRY) are compositionally biased toward basic and acidic residues. The interval 1–45 (MDVKERKPYRSLTRRRDAERRYTSSSADSEEGKAPQKSYSSSETL) is disordered. Residues 1 to 341 (MDVKERKPYR…KPSKYCNWKC (341 aa)) enclose the Teneurin N-terminal domain. Over 1 to 345 (MDVKERKPYR…YCNWKCAALS (345 aa)) the chain is Cytoplasmic. Ser124 is modified (phosphoserine). Residues 130 to 233 (RLWGRSTRSG…PPAGGAQEPA (104 aa)) are disordered. The span at 134-155 (RSTRSGRSSCLSSRANSNLTLT) shows a compositional bias: low complexity. The segment covering 156–166 (DTEHENTETDH) has biased composition (basic and acidic residues). Thr178 carries the post-translational modification Phosphothreonine. Residues 187–211 (HTPNQHHAASINSLNRGNFTPRSNP) show a composition bias toward polar residues. The chain crosses the membrane as a helical span at residues 346 to 366 (AIVISATLVILLAYFVAMHLF). Residues 367-2769 (GLNWHLQPME…FMRQSEMGRR (2403 aa)) are Extracellular-facing. Residues 400-426 (PSGGTGLETPDRKGKGTTEGKPSSFFP) form a disordered region. Residues 408–417 (TPDRKGKGTT) show a composition bias toward basic and acidic residues. An N-linked (GlcNAc...) asparagine glycan is attached at Asn467. Positions 507–526 (ARSLEGTPRQSRGTVPPSSH) are disordered. A compositionally biased stretch (polar residues) spans 514–526 (PRQSRGTVPPSSH). EGF-like domains follow at residues 562–593 (SVDN…PDCG), 594–624 (RASC…AECD), 626–658 (PTNQ…ESCE), 659–690 (EVDC…TNCE), 692–725 (PRAT…HDCS), 726–757 (IEIC…ACDQ), 758–787 (RACH…EHCT), and 788–831 (IAHY…AGCD). 22 cysteine pairs are disulfide-bonded: Cys566/Cys576, Cys570/Cys581, Cys583/Cys592, Cys601/Cys612, Cys614/Cys623, Cys630/Cys641, Cys635/Cys646, Cys648/Cys657, Cys662/Cys673, Cys667/Cys678, Cys680/Cys689, Cys700/Cys713, Cys715/Cys724, Cys729/Cys739, Cys733/Cys744, Cys746/Cys755, Cys760/Cys770, Cys764/Cys775, Cys777/Cys786, Cys800/Cys810, Cys804/Cys819, and Cys821/Cys830. N-linked (GlcNAc...) asparagine glycans are attached at residues Asn940 and Asn1259. NHL repeat units lie at residues 1216 to 1259 (SCPS…PSGN), 1264 to 1308 (LELR…IKST), 1334 to 1378 (TRCG…NGII), 1393 to 1444 (LSCD…VAGR), and 1523 to 1566 (CFSG…IRKN). One copy of the YD 1 repeat lies at 1576–1595 (YELSSPIDQELYLFDTTGKH). N-linked (GlcNAc...) asparagine glycosylation is present at Asn1609. YD repeat units follow at residues 1612 to 1632 (YTGD…VNVR), 1675 to 1694 (YHGN…WTTF), and 1695 to 1717 (YEYD…SSFR). Residues Asn1705, Asn1741, Asn1799, and Asn1884 are each glycosylated (N-linked (GlcNAc...) asparagine). YD repeat units follow at residues 1887-1906 (YSPG…ERME), 1928-1946 (YLEK…YIFE), 1947-1967 (FDKN…QTLE), 1974-1991 (YYRN…VIQD), 1992-2013 (FTED…VIYK), 2014-2031 (YGKL…TKVS), 2034-2054 (YDET…FTCT), 2057-2077 (YRQI…EGMV), 2085-2104 (YDNS…TPLP), 2110-2127 (YDDV…GVIY), 2128-2154 (YDIN…MKEV), 2156-2169 (YEIF…MTVQ), 2170-2193 (YDNM…TRYS), 2196-2216 (YDAD…WRYS), 2217-2237 (YDLN…LTPL), 2239-2259 (YDIR…DEDG), 2271-2291 (YNSA…SVRY), and 2293-2313 (YDGL…LQFF). Asn1985 is a glycosylation site (N-linked (GlcNAc...) asparagine). N-linked (GlcNAc...) asparagine glycosylation is present at Asn2188. Asn2328 carries an N-linked (GlcNAc...) asparagine glycan. One copy of the YD 23 repeat lies at 2339-2380 (YDLQGHLFAMELSSGDEFYIACDNIGTPLAVFSGTGLMIKQI). N-linked (GlcNAc...) asparagine glycosylation occurs at Asn2646.

This sequence belongs to the tenascin family. Teneurin subfamily. Homodimer; disulfide-linked. May also form heterodimer with either TENM1 or TENM2 or TENM3.

The protein resides in the cell membrane. Its subcellular location is the cell projection. It is found in the nucleus. The protein localises to the cytoplasm. Functionally, involved in neural development, regulating the establishment of proper connectivity within the nervous system. Plays a role in the establishment of the anterior-posterior axis during gastrulation. Regulates the differentiation and cellular process formation of oligodendrocytes and myelination of small-diameter axons in the central nervous system (CNS). Promotes activation of focal adhesion kinase. May function as a cellular signal transducer. This is Teneurin-4 (TENM4) from Homo sapiens (Human).